The primary structure comprises 748 residues: Phosphoribosylformylglycinamidine synthase subunit PurL (748 aa).

Histidine 47 is a catalytic residue. ATP is bound by residues tyrosine 50 and lysine 90. Glutamate 92 contacts Mg(2+). Substrate is bound by residues 93 to 96 (SHNH) and arginine 115. Residue histidine 94 is the Proton acceptor of the active site. Aspartate 116 lines the Mg(2+) pocket. Glutamine 240 lines the substrate pocket. Residue aspartate 268 participates in Mg(2+) binding. Substrate is bound at residue 312-314 (ESQ). Residues asparagine 500 and glycine 537 each coordinate ATP. Asparagine 538 is a binding site for Mg(2+). Serine 540 serves as a coordination point for substrate.

This sequence belongs to the FGAMS family. In terms of assembly, monomer. Part of the FGAM synthase complex composed of 1 PurL, 1 PurQ and 2 PurS subunits.

It localises to the cytoplasm. It catalyses the reaction N(2)-formyl-N(1)-(5-phospho-beta-D-ribosyl)glycinamide + L-glutamine + ATP + H2O = 2-formamido-N(1)-(5-O-phospho-beta-D-ribosyl)acetamidine + L-glutamate + ADP + phosphate + H(+). It functions in the pathway purine metabolism; IMP biosynthesis via de novo pathway; 5-amino-1-(5-phospho-D-ribosyl)imidazole from N(2)-formyl-N(1)-(5-phospho-D-ribosyl)glycinamide: step 1/2. Its function is as follows. Part of the phosphoribosylformylglycinamidine synthase complex involved in the purines biosynthetic pathway. Catalyzes the ATP-dependent conversion of formylglycinamide ribonucleotide (FGAR) and glutamine to yield formylglycinamidine ribonucleotide (FGAM) and glutamate. The FGAM synthase complex is composed of three subunits. PurQ produces an ammonia molecule by converting glutamine to glutamate. PurL transfers the ammonia molecule to FGAR to form FGAM in an ATP-dependent manner. PurS interacts with PurQ and PurL and is thought to assist in the transfer of the ammonia molecule from PurQ to PurL. The polypeptide is Phosphoribosylformylglycinamidine synthase subunit PurL (Leptospira biflexa serovar Patoc (strain Patoc 1 / Ames)).